A 476-amino-acid chain; its full sequence is MKISLPAFEKAKVLVVGDVMLDRYWAGPTARISPEAPVPVVKVEQLEDRPGGAANVAINIATLGGSASLAGIVGVDETADALTVGVRALGVEPNWHKVADKPTITKLRVMSRNQQLLRLDFEESYSQAESDALLAQSLSELDKVDVAVLSDYAKGALISPQSFIEAANAKGVKVLVDPKGSDFSKYRGAYLLTPNMSEFEVVVGKVESEADLVAKAQGLLQAFDLTAMLVTRSEKGMTLITKDQPELHIPTVAREVYDVTGAGDTVISALATAIAAGSDLPQACAIANTAAGIVVAKLGTSTVTRLELIEALSLSHGESGFGAVSEDQLAYALEQAKLRGERVVMTNGCFDILHAGHVSYLQQARALGDRLIVAVNTDASVKRLKGEGRPVNSEDRRMTVLAALASVDWVVPFSEDTPQRIISRLLPDLLVKGGDYKVEDIAGGSEVMAAGGQVKVLGFEDGISTTAIIQNIMANQ.

The interval 1-319 (MKISLPAFEK…EALSLSHGES (319 aa)) is ribokinase. Position 195-198 (195-198 (NMSE)) interacts with ATP. Asp264 is a catalytic residue. The cytidylyltransferase stretch occupies residues 345 to 476 (MTNGCFDILH…AIIQNIMANQ (132 aa)).

It in the N-terminal section; belongs to the carbohydrate kinase PfkB family. In the C-terminal section; belongs to the cytidylyltransferase family. In terms of assembly, homodimer.

The catalysed reaction is D-glycero-beta-D-manno-heptose 7-phosphate + ATP = D-glycero-beta-D-manno-heptose 1,7-bisphosphate + ADP + H(+). It carries out the reaction D-glycero-beta-D-manno-heptose 1-phosphate + ATP + H(+) = ADP-D-glycero-beta-D-manno-heptose + diphosphate. It participates in nucleotide-sugar biosynthesis; ADP-L-glycero-beta-D-manno-heptose biosynthesis; ADP-L-glycero-beta-D-manno-heptose from D-glycero-beta-D-manno-heptose 7-phosphate: step 1/4. The protein operates within nucleotide-sugar biosynthesis; ADP-L-glycero-beta-D-manno-heptose biosynthesis; ADP-L-glycero-beta-D-manno-heptose from D-glycero-beta-D-manno-heptose 7-phosphate: step 3/4. Functionally, catalyzes the phosphorylation of D-glycero-D-manno-heptose 7-phosphate at the C-1 position to selectively form D-glycero-beta-D-manno-heptose-1,7-bisphosphate. Its function is as follows. Catalyzes the ADP transfer from ATP to D-glycero-beta-D-manno-heptose 1-phosphate, yielding ADP-D-glycero-beta-D-manno-heptose. In Shewanella pealeana (strain ATCC 700345 / ANG-SQ1), this protein is Bifunctional protein HldE.